A 107-amino-acid chain; its full sequence is Ferredoxin (107 aa).

The propeptide occupies 1 to 8; the sequence is MVSGVSRN. The [2Fe-2S] cluster site is built by cysteine 45, cysteine 51, and cysteine 54.

It depends on [2Fe-2S] cluster as a cofactor.

The protein localises to the hydrogenosome. In terms of biological role, ferredoxins are iron-sulfur proteins that transfer electrons in a wide variety of metabolic reactions. The protein is Ferredoxin of Psalteriomonas lanterna (Amoeboflagellate).